Consider the following 487-residue polypeptide: Sodium-coupled neutral amino acid symporter 1 (487 aa).

Residues 1-74 lie on the Cytoplasmic side of the membrane; it reads MMHFKSGLEL…EYIPGTTSLG (74 aa). Serine 6 is subject to Phosphoserine. Threonine 11 bears the Phosphothreonine mark. Residues serine 25, serine 28, serine 49, and serine 52 each carry the phosphoserine modification. Phosphothreonine is present on threonine 54. Serine 56 bears the Phosphoserine mark. Residues 75–97 traverse the membrane as a helical segment; that stretch reads MSVFNLSNAIMGSGILGLAFALA. The Extracellular segment spans residues 98–112; sequence NTGILLFLVLLTSVT. A helical transmembrane segment spans residues 113–133; the sequence is LLSIYSINLLLICSKETGCMV. Topologically, residues 134 to 147 are cytoplasmic; sequence YEKLGEQVFGTTGK. The chain crosses the membrane as a helical span at residues 148–168; sequence FVIFGATSLQNTGAMLSYLFI. Residues 169 to 188 are Extracellular-facing; it reads VKNELPSAIKFLMGKEETFS. The helical transmembrane segment at 189-211 threads the bilayer; sequence AWYVDGRVLVVIVTFGIILPLCL. Residues 212–216 are Cytoplasmic-facing; the sequence is LKNLG. A helical transmembrane segment spans residues 217–237; that stretch reads YLGYTSGFSLSCMVFFLIVVI. The Extracellular segment spans residues 238–275; it reads YKKFQIPCIVPELNSTISANSTNADTCTPKYVTLNSKT. Cysteine 245 and cysteine 264 are oxidised to a cystine. 2 N-linked (GlcNAc...) asparagine glycosylation sites follow: asparagine 251 and asparagine 257. The chain crosses the membrane as a helical span at residues 276-296; the sequence is VYALPTIAFAFVCHPSVLPIY. Residues 297–312 are Cytoplasmic-facing; that stretch reads SELKDRSQKKMQMVSN. Residues 313 to 333 traverse the membrane as a helical segment; that stretch reads ISFFAMFVMYFLTAIFGYLTF. Topologically, residues 334–350 are extracellular; that stretch reads YDNVQSDLLHKYQGKDD. Residues 351–371 form a helical membrane-spanning segment; sequence ILILTVRLAVIVAVILTVPVL. Topologically, residues 372–393 are cytoplasmic; it reads FFTVRSSLFELAKKTKFNLCRH. The chain crosses the membrane as a helical span at residues 394–414; sequence TVVTCILLVVINLLVISIPSM. Residues 415 to 416 are Extracellular-facing; the sequence is KD. Residues 417–437 form a helical membrane-spanning segment; it reads IFGVVGVTSANMLIFILPSSL. Residues 438-452 lie on the Cytoplasmic side of the membrane; it reads YLKITDQDGDKGTQR. Residues 453 to 473 form a helical membrane-spanning segment; the sequence is IWAALFLGLGVLFSLVSIPLV. At 474–487 the chain is on the extracellular side; the sequence is IYDWACSSSSDEGH.

Belongs to the amino acid/polyamine transporter 2 family. Post-translationally, N-glycosylation plays an important role in the L-glutamine transport.

It localises to the cell membrane. It catalyses the reaction L-glutamine(in) + Na(+)(in) = L-glutamine(out) + Na(+)(out). It carries out the reaction L-alanine(in) + Na(+)(in) = L-alanine(out) + Na(+)(out). The catalysed reaction is L-asparagine(in) + Na(+)(in) = L-asparagine(out) + Na(+)(out). The enzyme catalyses L-histidine(in) + Na(+)(in) = L-histidine(out) + Na(+)(out). It catalyses the reaction L-serine(in) + Na(+)(in) = L-serine(out) + Na(+)(out). It carries out the reaction L-cysteine(in) + Na(+)(in) = L-cysteine(out) + Na(+)(out). The catalysed reaction is L-methionine(in) + Na(+)(in) = L-methionine(out) + Na(+)(out). The enzyme catalyses glycine(in) + Na(+)(in) = glycine(out) + Na(+)(out). It catalyses the reaction L-threonine(in) + Na(+)(in) = L-threonine(out) + Na(+)(out). It carries out the reaction L-proline(in) + Na(+)(in) = L-proline(out) + Na(+)(out). Its activity is regulated as follows. Inhibited by alpha-(methylamino)isobutyric acid (MeAIB). Inhibited by lithium, potassium, choline ions, N-methylglucamine. The pH dependence has an allosteric effect on the transport. Functionally, symporter that cotransports short-chain neutral amino acids and sodium ions from the extraccellular to the intracellular side of the cell membrane. The transport is elctrogenic, pH dependent and driven by the Na(+) electrochemical gradient. Participates in the astroglia-derived glutamine transport into GABAergic interneurons for neurotransmitter GABA de novo synthesis. May also contributes to amino acid transport in placental trophoblast. Regulates synaptic plasticity. The sequence is that of Sodium-coupled neutral amino acid symporter 1 from Pongo abelii (Sumatran orangutan).